Here is a 125-residue protein sequence, read N- to C-terminus: Small ribosomal subunit protein uS13 (125 aa).

The interval 90-125 is disordered; the sequence is QRHRKGLPVRGQRTKTNARTRKGPKRTVAGKKKATK.

It belongs to the universal ribosomal protein uS13 family. Part of the 30S ribosomal subunit. Forms a loose heterodimer with protein S19. Forms two bridges to the 50S subunit in the 70S ribosome.

In terms of biological role, located at the top of the head of the 30S subunit, it contacts several helices of the 16S rRNA. In the 70S ribosome it contacts the 23S rRNA (bridge B1a) and protein L5 of the 50S subunit (bridge B1b), connecting the 2 subunits; these bridges are implicated in subunit movement. Contacts the tRNAs in the A and P-sites. The polypeptide is Small ribosomal subunit protein uS13 (Bifidobacterium adolescentis (strain ATCC 15703 / DSM 20083 / NCTC 11814 / E194a)).